The chain runs to 115 residues: Large ribosomal subunit protein P2 (115 aa).

An N-acetylmethionine modification is found at Met1. Ser17 and Ser19 each carry phosphoserine. At Lys21 the chain carries N6-acetyllysine; alternate. Residue Lys21 is modified to N6-succinyllysine; alternate. Low complexity predominate over residues 76–90; sequence APGSAAPAAGSAPAA. Residues 76–115 are disordered; it reads APGSAAPAAGSAPAAAEERKEEKKEESEESDDDMGFGLFD. Ser79 and Ser86 each carry phosphoserine. Residues 91 to 101 are compositionally biased toward basic and acidic residues; that stretch reads AEERKEEKKEE. Ser102 and Ser105 each carry phosphoserine.

The protein belongs to the eukaryotic ribosomal protein P1/P2 family. In terms of assembly, heterodimer with RPLP1 at the lateral ribosomal stalk of the large ribosomal subunit.

Its function is as follows. Plays an important role in the elongation step of protein synthesis. This Equus caballus (Horse) protein is Large ribosomal subunit protein P2 (RPLP2).